A 37-amino-acid polypeptide reads, in one-letter code: Dolichyl-diphosphooligosaccharide--protein glycosyltransferase subunit 4B (37 aa).

The Lumenal portion of the chain corresponds to 1–8; the sequence is MFDDQDLG. A helical membrane pass occupies residues 9 to 29; sequence FFANFLGIFIFVLVMAYHFVM. Residues 30–37 lie on the Cytoplasmic side of the membrane; the sequence is ADVKYEGN.

The protein belongs to the OST4 family. As to quaternary structure, component of the oligosaccharyltransferase (OST) complex.

It is found in the endoplasmic reticulum membrane. Functionally, subunit of the oligosaccharyl transferase (OST) complex that catalyzes the initial transfer of a defined glycan (Glc(3)Man(9)GlcNAc(2) in eukaryotes) from the lipid carrier dolichol-pyrophosphate to an asparagine residue within an Asn-X-Ser/Thr consensus motif in nascent polypeptide chains, the first step in protein N-glycosylation. N-glycosylation occurs cotranslationally and the complex associates with the Sec61 complex at the channel-forming translocon complex that mediates protein translocation across the endoplasmic reticulum (ER). All subunits are required for a maximal enzyme activity. The chain is Dolichyl-diphosphooligosaccharide--protein glycosyltransferase subunit 4B (OST4B) from Oryza sativa subsp. japonica (Rice).